Reading from the N-terminus, the 260-residue chain is 5'-nucleotidase SurE (260 aa).

A divalent metal cation is bound by residues Asp13, Asp14, Ser44, and Asn102.

This sequence belongs to the SurE nucleotidase family. A divalent metal cation serves as cofactor.

It localises to the cytoplasm. The catalysed reaction is a ribonucleoside 5'-phosphate + H2O = a ribonucleoside + phosphate. Nucleotidase that shows phosphatase activity on nucleoside 5'-monophosphates. The chain is 5'-nucleotidase SurE from Christiangramia forsetii (strain DSM 17595 / CGMCC 1.15422 / KT0803) (Gramella forsetii).